A 58-amino-acid chain; its full sequence is Large ribosomal subunit protein uL30 (58 aa).

Belongs to the universal ribosomal protein uL30 family. Part of the 50S ribosomal subunit.

The sequence is that of Large ribosomal subunit protein uL30 from Pseudomonas fluorescens (strain ATCC BAA-477 / NRRL B-23932 / Pf-5).